Here is a 415-residue protein sequence, read N- to C-terminus: Polyadenylate-binding protein RBP45C (415 aa).

Positions 1 to 77 (MMQQPPPASN…GGSQNPGSAG (77 aa)) are disordered. Low complexity predominate over residues 23 to 64 (QQAYLQQQQSWMMQHQQQQQGQPPAGWNQQSAPSSGQPQQQQ). RRM domains lie at 80–160 (RSLW…WAQL), 173–252 (HTVF…PAAN), and 278–350 (TTIF…WGRS). Positions 344-356 (RLSWGRSPSNKQT) are enriched in polar residues. Positions 344-369 (RLSWGRSPSNKQTQPDQAQYGGGGGY) are disordered.

The protein belongs to the polyadenylate-binding RBP45 family. In terms of assembly, interacts with the poly(A) tail of mRNA in nucleus. As to expression, mostly expressed in seedlings and stems, and, to a lower extent, in leaves and flowers.

The protein localises to the nucleus. In terms of biological role, heterogeneous nuclear ribonucleoprotein (hnRNP)-protein binding the poly(A) tail of mRNA and probably involved in some steps of pre-mRNA maturation. This is Polyadenylate-binding protein RBP45C (RBP45C) from Arabidopsis thaliana (Mouse-ear cress).